The following is a 322-amino-acid chain: Glucokinase (322 aa).

10-15 (GDIGGT) contributes to the ATP binding site.

The protein belongs to the bacterial glucokinase family.

The protein resides in the cytoplasm. It catalyses the reaction D-glucose + ATP = D-glucose 6-phosphate + ADP + H(+). The polypeptide is Glucokinase (Hahella chejuensis (strain KCTC 2396)).